Consider the following 258-residue polypeptide: C4b-binding protein beta chain (258 aa).

The N-terminal stretch at 1 to 15 (MLCLVVCCLIWLISA) is a signal peptide. In terms of domain architecture, Sushi 1; atypical; lacks a Cys spans 18–75 (GSCSEPPPVNNSVFVGKETEEQILGIYLCIKGYHLVGKKSLVFDPSKEWNSTLPECLL). Residues N27, N67, N89, N95, and N114 are each glycosylated (N-linked (GlcNAc...) asparagine). 5 disulfides stabilise this stretch: C46/C73, C78/C118, C104/C131, C136/C176, and C162/C188. 2 consecutive Sushi domains span residues 76 to 133 (GHCP…ICRS) and 134 to 190 (RDCE…TCES). The N-linked (GlcNAc...) asparagine glycan is linked to N218.

Disulfide-linked complex of alpha and beta chains.

The protein localises to the secreted. Its function is as follows. Controls the classical pathway of complement activation. It binds as a cofactor to C3b/C4b inactivator (C3bINA), which then hydrolyzes the complement fragment C4b. It also accelerates the degradation of the C4bC2a complex (C3 convertase) by dissociating the complement fragment C2a. It also interacts with anticoagulant protein S and with serum amyloid P component. This chain is C4b-binding protein beta chain (C4bpb), found in Rattus norvegicus (Rat).